A 325-amino-acid polypeptide reads, in one-letter code: Aldo-keto reductase family 1 member D1 (325 aa).

Residues 22–26 and Asp-52 each bind NADP(+); that span reads GLGTY. Tyr-26 is a substrate binding site. Substrate is bound by residues Tyr-57, Trp-88, Glu-119, and Tyr-131. Catalysis depends on Tyr-57, which acts as the Proton donor. NADP(+) is bound by residues 168 to 169, Gln-192, and 218 to 223; these read SN and HSPLGT. Position 228 is a phosphoserine (Ser-228). A substrate-binding site is contributed by Trp-229. 272 to 282 is an NADP(+) binding site; it reads KSFTPERIKEN.

It belongs to the aldo/keto reductase family.

Its subcellular location is the cytoplasm. The catalysed reaction is 5beta-cholestan-3-one + NADP(+) = cholest-4-en-3-one + NADPH + H(+). It carries out the reaction 4,5beta-dihydrocortisone + NADP(+) = cortisone + NADPH + H(+). The enzyme catalyses cortisol + NADPH + H(+) = 5beta-dihydrocortisol + NADP(+). It catalyses the reaction corticosterone + NADPH + H(+) = 5beta-dihydrocorticosterone + NADP(+). The catalysed reaction is 7alpha,12alpha-dihydroxycholest-4-en-3-one + NADPH + H(+) = 7alpha,12alpha-dihydroxy-5beta-cholestan-3-one + NADP(+). It carries out the reaction 7alpha-hydroxycholest-4-en-3-one + NADPH + H(+) = 7alpha-hydroxy-5beta-cholestan-3-one + NADP(+). The enzyme catalyses epitestosterone + NADPH + H(+) = 5beta-dihydroepitestosterone + NADP(+). It catalyses the reaction androst-4-ene-3,17-dione + NADPH + H(+) = 5beta-androstane-3,17-dione + NADP(+). The catalysed reaction is progesterone + NADPH + H(+) = 5beta-pregnan-3,20-dione + NADP(+). It carries out the reaction 21-hydroxyprogesterone + NADPH + H(+) = 5beta-dihydrodeoxycorticosterone + NADP(+). The enzyme catalyses aldosterone + NADPH + H(+) = 5beta-dihydroaldosterone + NADP(+). It catalyses the reaction 17beta-hydroxyandrosta-1,4-dien-3-one + NADPH + H(+) = 17beta-hydroxy-5beta-androst-1-en-3-one + NADP(+). The catalysed reaction is 17beta-hydroxyestr-4-en-3-one + NADPH + H(+) = 17beta-hydroxy-5beta-estran-3-one + NADP(+). It carries out the reaction 5beta-dihydrotestosterone + NADP(+) = testosterone + NADPH + H(+). The enzyme catalyses androst-4-ene-3,11,17-trione + NADPH + H(+) = 17beta-hydroxyandrost-4-ene-3,11-dione + NADP(+). Its activity is regulated as follows. Subject to inhibition by high substrate concentrations. Inhibited by testosterone concentrations above 10 uM. Inhibited by the primary and secondary bile acids chenodeoxycholic acid and ursodeoxycholic acid. In terms of biological role, catalyzes the stereospecific NADPH-dependent reduction of the C4-C5 double bond of bile acid intermediates and steroid hormones carrying a delta(4)-3-one structure to yield an A/B cis-ring junction. This cis-configuration is crucial for bile acid biosynthesis and plays important roles in steroid metabolism. Capable of reducing a broad range of delta-(4)-3-ketosteroids from C18 (such as, 17beta-hydroxyestr-4-en-3-one) to C27 (such as, 7alpha-hydroxycholest-4-en-3-one). This chain is Aldo-keto reductase family 1 member D1 (Akr1d1), found in Mus musculus (Mouse).